The following is a 326-amino-acid chain: Protein FAM50 homolog (326 aa).

Residues 77–111 (ISNRDLQVARGDQSSSTQSKDSQEAREKEEHVAKH) are disordered. Over residues 97-109 (DSQEAREKEEHVA) the composition is skewed to basic and acidic residues.

This sequence belongs to the FAM50 family.

The sequence is that of Protein FAM50 homolog from Caenorhabditis elegans.